A 496-amino-acid polypeptide reads, in one-letter code: Putative BTB/POZ domain and WD-repeat protein R61 (496 aa).

In terms of domain architecture, BTB spans 8–78 (SNINLILNDE…MFSDIDIYKN (71 aa)). WD repeat units follow at residues 149-189 (KFPR…FNSK), 208-248 (IFDN…KEFQ), 250-285 (DYKI…RKVL), 291-330 (KSIG…IIKW), 333-371 (VSKS…KILE), and 422-464 (MYFS…DIIY).

The protein belongs to the mimivirus BTB/WD family.

This is Putative BTB/POZ domain and WD-repeat protein R61 from Acanthamoeba polyphaga (Amoeba).